The sequence spans 147 residues: Small ribosomal subunit protein uS12 (147 aa).

It belongs to the universal ribosomal protein uS12 family. Part of the 30S ribosomal subunit.

In terms of biological role, with S4 and S5 plays an important role in translational accuracy. Located at the interface of the 30S and 50S subunits. This is Small ribosomal subunit protein uS12 from Thermofilum pendens (strain DSM 2475 / Hrk 5).